We begin with the raw amino-acid sequence, 246 residues long: NAD(P)H-hydrate epimerase (246 aa).

The region spanning 12–234 (AAEIDKELMG…DFANKFGFEP (223 aa)) is the YjeF N-terminal domain. 69–73 (NNGGD) contacts (6S)-NADPHX. K(+) is bound by residues asparagine 70 and aspartate 138. (6S)-NADPHX contacts are provided by residues 142–148 (GFSFKPP) and aspartate 173. Threonine 176 serves as a coordination point for K(+).

The protein belongs to the NnrE/AIBP family. K(+) serves as cofactor.

The protein localises to the cytoplasm. Its subcellular location is the mitochondrion. It carries out the reaction (6R)-NADHX = (6S)-NADHX. The catalysed reaction is (6R)-NADPHX = (6S)-NADPHX. Its function is as follows. Catalyzes the epimerization of the S- and R-forms of NAD(P)HX, a damaged form of NAD(P)H that is a result of enzymatic or heat-dependent hydration. This is a prerequisite for the S-specific NAD(P)H-hydrate dehydratase to allow the repair of both epimers of NAD(P)HX. The chain is NAD(P)H-hydrate epimerase from Saccharomyces cerevisiae (strain ATCC 204508 / S288c) (Baker's yeast).